The following is a 152-amino-acid chain: Globin CTT-E/E' (152 aa).

The first 15 residues, 1-15 (MKFIILALCVAAASA), serve as a signal peptide directing secretion. Positions 16–152 (LSGDQIGLVQ…AFFGAVFAKM (137 aa)) constitute a Globin domain. 2 residues coordinate heme b: His73 and His102.

It belongs to the globin family.

The chain is Globin CTT-E/E' (CTT-E) from Chironomus thummi thummi (Midge).